We begin with the raw amino-acid sequence, 685 residues long: Twinkle mtDNA helicase (685 aa).

Residues 1-31 (MWLLLRRAYPLRILLPLRGEWVGRRGLPRSL) constitute a mitochondrion transit peptide. The tract at residues 1-122 (MWLLLRRAYP…LCMTSLAEGS (122 aa)) is contributes to single strand DNA binding activity. Positions 54–214 (PVTTTEIRQY…LVFPWFTPGS (161 aa)) are N-terminal region (NTR). The tract at residues 122-373 (SWEDLQASVE…WHKSIVSFRQ (252 aa)) is required for hexamers formation and DNA helicase activity. Residues 215 to 335 (SGLRGLKLLG…LNPKRCSLVR (121 aa)) form a primase-like domain region. One can recognise an SF4 helicase domain in the interval 385–636 (VEQAAGVRWS…LTFSIPPKSK (252 aa)). The maybe required for stable oligomeric structure stretch occupies residues 406-591 (HRKGELTVFT…QEADNVLILQ (186 aa)). Residue 416 to 423 (GPTGSGKT) participates in ATP binding. Residues 454–482 (RVMLTQFAVTRLEEQLDKYEEWADRFEDL) are a coiled coil. The interval 641–685 (KIKDDNGLVAKKSSSGKKGAAHQNPEICLGQDPSPAQPDTSKSSG) is might negatively regulate ATPase activity. The disordered stretch occupies residues 642–685 (IKDDNGLVAKKSSSGKKGAAHQNPEICLGQDPSPAQPDTSKSSG).

Homohexamer (via C-terminus), which assembles in a ring-like structure. Homoheptamer, which assembles in a ring-like structure. Homooctamer, which assembles in a ring-like structure. Oligomers may sequentially eject two monomers (octamer&gt;heptamer&gt;hexamer) upon DNA binding. Oligomerization is Mg(2+), nucleotide and DNA-independent, however, Mg(2+) and nucleotide stabilize the homohexameric form. Interacts with POLG in vitro. Interacts with LONP1. As to expression, ubiquitous with the highest levels in the liver, heart and kidneys. The skeletal muscle, brain and testis showed lower but detectable expression. Expression is coregulated with MRPL43.

The protein resides in the mitochondrion matrix. The protein localises to the mitochondrion nucleoid. It localises to the mitochondrion inner membrane. The enzyme catalyses ATP + H2O = ADP + phosphate + H(+). It carries out the reaction Couples ATP hydrolysis with the unwinding of duplex DNA at the replication fork by translocating in the 5'-3' direction. This creates two antiparallel DNA single strands (ssDNA). The leading ssDNA polymer is the template for DNA polymerase III holoenzyme which synthesizes a continuous strand.. Functionally, mitochondrial helicase involved in mtDNA replication and repair. Might have a role in mtDNA repair. Has DNA strand separation activity needed to form a processive replication fork for leading strand synthesis which is catalyzed by the formation of a replisome complex with POLG and mtSDB. Preferentially unwinds DNA substrates with pre-existing 5'-and 3'- single-stranded tails but is also active on a 5'- flap substrate. Can dissociate the invading strand of immobile or mobile D-loop DNA structures irrespective of the single strand polarity of the third strand. In addition to its DNA strand separation activity, also has DNA strand annealing, DNA strand-exchange and DNA branch migration activities. The polypeptide is Twinkle mtDNA helicase (Mus musculus (Mouse)).